The sequence spans 281 residues: Pantothenate synthetase (281 aa).

30 to 37 is a binding site for ATP; the sequence is MGNLHQGH. The Proton donor role is filled by H37. Q61 contacts (R)-pantoate. Q61 contributes to the beta-alanine binding site. 149–152 is a binding site for ATP; that stretch reads GNKD. Q155 contributes to the (R)-pantoate binding site. Residues I178 and 186–189 contribute to the ATP site; that span reads MSSR.

It belongs to the pantothenate synthetase family. Homodimer.

It localises to the cytoplasm. It carries out the reaction (R)-pantoate + beta-alanine + ATP = (R)-pantothenate + AMP + diphosphate + H(+). It functions in the pathway cofactor biosynthesis; (R)-pantothenate biosynthesis; (R)-pantothenate from (R)-pantoate and beta-alanine: step 1/1. In terms of biological role, catalyzes the condensation of pantoate with beta-alanine in an ATP-dependent reaction via a pantoyl-adenylate intermediate. This chain is Pantothenate synthetase, found in Shewanella baltica (strain OS185).